The following is a 289-amino-acid chain: Bifunctional protein FolD 2 (289 aa).

NADP(+) contacts are provided by residues G162–S164, S187, and I228.

The protein belongs to the tetrahydrofolate dehydrogenase/cyclohydrolase family. In terms of assembly, homodimer.

The catalysed reaction is (6R)-5,10-methylene-5,6,7,8-tetrahydrofolate + NADP(+) = (6R)-5,10-methenyltetrahydrofolate + NADPH. The enzyme catalyses (6R)-5,10-methenyltetrahydrofolate + H2O = (6R)-10-formyltetrahydrofolate + H(+). It functions in the pathway one-carbon metabolism; tetrahydrofolate interconversion. Its function is as follows. Catalyzes the oxidation of 5,10-methylenetetrahydrofolate to 5,10-methenyltetrahydrofolate and then the hydrolysis of 5,10-methenyltetrahydrofolate to 10-formyltetrahydrofolate. The polypeptide is Bifunctional protein FolD 2 (Deinococcus geothermalis (strain DSM 11300 / CIP 105573 / AG-3a)).